The primary structure comprises 292 residues: Protease HtpX (292 aa).

2 consecutive transmembrane segments (helical) span residues 4-24 (IALF…VLSL) and 34-54 (GLMI…LLMS). His139 contacts Zn(2+). The active site involves Glu140. Zn(2+) is bound at residue His143. 2 helical membrane passes run 158 to 178 (IVNT…AGFL) and 192 to 212 (MIYF…ASII). Glu221 is a binding site for Zn(2+).

This sequence belongs to the peptidase M48B family. It depends on Zn(2+) as a cofactor.

Its subcellular location is the cell inner membrane. The polypeptide is Protease HtpX (Serratia proteamaculans (strain 568)).